A 536-amino-acid chain; its full sequence is Xylulose kinase (536 aa).

Residues His99, Arg170, Asp280, and Asn281 each contribute to the substrate site. Residues Trp355, 441–442 (GA), and Asn445 each bind ATP.

The protein belongs to the FGGY kinase family. As to quaternary structure, monomer.

The catalysed reaction is D-xylulose + ATP = D-xylulose 5-phosphate + ADP + H(+). Its function is as follows. Phosphorylates D-xylulose to produce D-xylulose 5-phosphate, a molecule that may play an important role in the regulation of glucose metabolism and lipogenesis. The polypeptide is Xylulose kinase (XYLB) (Homo sapiens (Human)).